The following is a 124-amino-acid chain: Flagellar transcriptional regulator FlhD (124 aa).

The protein belongs to the FlhD family. Homodimer; disulfide-linked. Forms a heterohexamer composed of two FlhC and four FlhD subunits. Each FlhC binds a FlhD dimer, forming a heterotrimer, and a hexamer assembles by dimerization of two heterotrimers.

Its subcellular location is the cytoplasm. Its function is as follows. Functions in complex with FlhC as a master transcriptional regulator that regulates transcription of several flagellar and non-flagellar operons by binding to their promoter region. Activates expression of class 2 flagellar genes, including fliA, which is a flagellum-specific sigma factor that turns on the class 3 genes. Also regulates genes whose products function in a variety of physiological pathways. The chain is Flagellar transcriptional regulator FlhD from Pectobacterium carotovorum (Erwinia carotovora).